Here is a 515-residue protein sequence, read N- to C-terminus: Cytochrome P450 1A2 (515 aa).

Serine 69 is a glycosylation site (O-linked (GlcNAc) serine). Phenylalanine 226 serves as a coordination point for substrate. Cysteine 458 is a binding site for heme.

This sequence belongs to the cytochrome P450 family. Interacts with PGRMC1; the interaction requires PGRMC1 homodimerization. Heme serves as cofactor.

It localises to the endoplasmic reticulum membrane. Its subcellular location is the microsome membrane. It carries out the reaction an organic molecule + reduced [NADPH--hemoprotein reductase] + O2 = an alcohol + oxidized [NADPH--hemoprotein reductase] + H2O + H(+). The catalysed reaction is 17beta-estradiol + reduced [NADPH--hemoprotein reductase] + O2 = 2-hydroxy-17beta-estradiol + oxidized [NADPH--hemoprotein reductase] + H2O + H(+). It catalyses the reaction 17beta-estradiol + reduced [NADPH--hemoprotein reductase] + O2 = 4-hydroxy-17beta-estradiol + oxidized [NADPH--hemoprotein reductase] + H2O + H(+). The enzyme catalyses estrone + reduced [NADPH--hemoprotein reductase] + O2 = 2-hydroxyestrone + oxidized [NADPH--hemoprotein reductase] + H2O + H(+). It carries out the reaction estrone + reduced [NADPH--hemoprotein reductase] + O2 = 4-hydroxyestrone + oxidized [NADPH--hemoprotein reductase] + H2O + H(+). The catalysed reaction is cholesterol + reduced [NADPH--hemoprotein reductase] + O2 = 25-hydroxycholesterol + oxidized [NADPH--hemoprotein reductase] + H2O + H(+). It catalyses the reaction all-trans-retinol + reduced [NADPH--hemoprotein reductase] + O2 = all-trans-retinal + oxidized [NADPH--hemoprotein reductase] + 2 H2O + H(+). The enzyme catalyses all-trans-retinal + reduced [NADPH--hemoprotein reductase] + O2 = all-trans-retinoate + oxidized [NADPH--hemoprotein reductase] + H2O + 2 H(+). It carries out the reaction (5Z,8Z,11Z,14Z)-eicosatetraenoate + reduced [NADPH--hemoprotein reductase] + O2 = (14R,15S)-epoxy-(5Z,8Z,11Z)-eicosatrienoate + oxidized [NADPH--hemoprotein reductase] + H2O + H(+). The catalysed reaction is (5Z,8Z,11Z,14Z)-eicosatetraenoate + reduced [NADPH--hemoprotein reductase] + O2 = (14S,15R)-epoxy-(5Z,8Z,11Z)-eicosatrienoate + oxidized [NADPH--hemoprotein reductase] + H2O + H(+). It catalyses the reaction (5Z,8Z,11Z,14Z,17Z)-eicosapentaenoate + reduced [NADPH--hemoprotein reductase] + O2 = (17R,18S)-epoxy-(5Z,8Z,11Z,14Z)-eicosatetraenoate + oxidized [NADPH--hemoprotein reductase] + H2O + H(+). The enzyme catalyses (4Z,7Z,10Z,13Z,16Z,19Z)-docosahexaenoate + reduced [NADPH--hemoprotein reductase] + O2 = (19R,20S)-epoxy-(4Z,7Z,10Z,13Z,16Z)-docosapentaenoate + oxidized [NADPH--hemoprotein reductase] + H2O + H(+). It carries out the reaction (5S)-hydroperoxy-(6E,8Z,11Z,14Z)-eicosatetraenoate = 5-oxo-(6E,8Z,11Z,14Z)-eicosatetraenoate + H2O. The catalysed reaction is (12S)-hydroperoxy-(5Z,8Z,10E,14Z)-eicosatetraenoate = 12-oxo-(5Z,8Z,10E,14Z)-eicosatetraenoate + H2O. It catalyses the reaction (15S)-hydroperoxy-(5Z,8Z,11Z,13E)-eicosatetraenoate = 15-oxo-(5Z,8Z,11Z,13E)-eicosatetraenoate + H2O. The enzyme catalyses (13S)-hydroperoxy-(9Z,11E)-octadecadienoate = 13-oxo-(9Z,11E)-octadecadienoate + H2O. It carries out the reaction (5Z,8Z,11Z,14Z)-eicosatetraenoate + reduced [NADPH--hemoprotein reductase] + O2 = 13-hydroxy-(5Z,8Z,11Z,14Z)-eicosatetraenoate + oxidized [NADPH--hemoprotein reductase] + H2O + H(+). The catalysed reaction is (5Z,8Z,11Z,14Z)-eicosatetraenoate + reduced [NADPH--hemoprotein reductase] + O2 = 19-hydroxy-(5Z,8Z,11Z,14Z)-eicosatetraenoate + oxidized [NADPH--hemoprotein reductase] + H2O + H(+). It catalyses the reaction (9Z,12Z)-octadecadienoate + reduced [NADPH--hemoprotein reductase] + O2 = 11-hydroxy-(9Z,12Z)-octadecadienoate + oxidized [NADPH--hemoprotein reductase] + H2O + H(+). It functions in the pathway cofactor metabolism; retinol metabolism. Its pathway is steroid metabolism; cholesterol metabolism. The protein operates within lipid metabolism; arachidonate metabolism. Its function is as follows. A cytochrome P450 monooxygenase involved in the metabolism of various endogenous substrates, including fatty acids, steroid hormones and vitamins. Mechanistically, uses molecular oxygen inserting one oxygen atom into a substrate, and reducing the second into a water molecule, with two electrons provided by NADPH via cytochrome P450 reductase (NADPH--hemoprotein reductase). Catalyzes the hydroxylation of carbon-hydrogen bonds. Exhibits high catalytic activity for the formation of hydroxyestrogens from estrone (E1) and 17beta-estradiol (E2), namely 2-hydroxy E1 and E2. Metabolizes cholesterol toward 25-hydroxycholesterol, a physiological regulator of cellular cholesterol homeostasis. May act as a major enzyme for all-trans retinoic acid biosynthesis in the liver. Catalyzes two successive oxidative transformation of all-trans retinol to all-trans retinal and then to the active form all-trans retinoic acid. Primarily catalyzes stereoselective epoxidation of the last double bond of polyunsaturated fatty acids (PUFA), displaying a strong preference for the (R,S) stereoisomer. Catalyzes bisallylic hydroxylation and omega-1 hydroxylation of PUFA. May also participate in eicosanoids metabolism by converting hydroperoxide species into oxo metabolites (lipoxygenase-like reaction, NADPH-independent). Plays a role in the oxidative metabolism of xenobiotics. Catalyzes the N-hydroxylation of heterocyclic amines and the O-deethylation of phenacetin. Metabolizes caffeine via N3-demethylation. The chain is Cytochrome P450 1A2 (CYP1A2) from Cavia porcellus (Guinea pig).